The following is a 61-amino-acid chain: Alpha-conotoxine-like Am1.4 (61 aa).

The first 21 residues, 1-21, serve as a signal peptide directing secretion; it reads MGMRMMFTVFLLVVLATTVVS. A propeptide spanning residues 22 to 44 is cleaved from the precursor; sequence FMSGRASHGRNAAASDLIALTIK.

Belongs to the conotoxin A superfamily. In terms of processing, is not hydroxylated. Contains 2 disulfide bonds. Expressed by the venom duct.

It localises to the secreted. Alpha-conotoxins act on postsynaptic membranes, they bind to the nicotinic acetylcholine receptors (nAChR) and thus inhibit them. This is Alpha-conotoxine-like Am1.4 from Conus amadis (Amadis cone).